The chain runs to 83 residues: Apolipoprotein C-I, acidic form (83 aa).

Positions 1 to 26 (MRLFLSLPVLVVVLSMVLEGPAPAQG) are cleaved as a signal peptide.

It belongs to the apolipoprotein C1 family.

The protein localises to the secreted. This is Apolipoprotein C-I, acidic form (APOC1A) from Gorilla gorilla gorilla (Western lowland gorilla).